A 309-amino-acid chain; its full sequence is D-alanine--D-alanine ligase (309 aa).

The 203-residue stretch at 104–306 (KLLWQSFNLP…YQILVQKILE (203 aa)) folds into the ATP-grasp domain. 137–192 (ISLLGLPIIVKPNQEGSSIGITIVYSYETLYKACKTAFIFDNSILIEKFIYGEEYT) contributes to the ATP binding site. 3 residues coordinate Mg(2+): D260, E273, and N275.

This sequence belongs to the D-alanine--D-alanine ligase family. Mg(2+) serves as cofactor. Requires Mn(2+) as cofactor.

It localises to the cytoplasm. The catalysed reaction is 2 D-alanine + ATP = D-alanyl-D-alanine + ADP + phosphate + H(+). The protein operates within cell wall biogenesis; peptidoglycan biosynthesis. In terms of biological role, cell wall formation. The polypeptide is D-alanine--D-alanine ligase (Buchnera aphidicola subsp. Baizongia pistaciae (strain Bp)).